The chain runs to 386 residues: Putative F-box/kelch-repeat protein At3g17280 (386 aa).

Positions 1–48 (MTTISDLPYDLLPEILSRLPTKSIPKLKTTCKKWYALFKDPKFVEKKL) constitute an F-box domain. Kelch repeat units follow at residues 155-203 (SYKI…LKES) and 340-386 (RIYI…IVEV).

This is Putative F-box/kelch-repeat protein At3g17280 from Arabidopsis thaliana (Mouse-ear cress).